The chain runs to 312 residues: Non-structural protein 12A (312 aa).

The segment covering 1 to 23 (MFKSGSGSLKRSGSISSVKSFSG) has biased composition (low complexity). Disordered stretches follow at residues 1–37 (MFKS…RGSV), 62–99 (FVPE…QNAD), and 111–161 (ESSK…GTGD). The span at 63–77 (VPEKTKSEGNLKDKS) shows a compositional bias: basic and acidic residues. Positions 78-98 (SVITGNFGSSGPINAHTNQNA) are enriched in polar residues. The span at 122 to 134 (DARHTATDSRLSQ) shows a compositional bias: basic and acidic residues.

It belongs to the phytoreovirus non-structural protein Pns12A family.

It is found in the host cytoplasm. In terms of biological role, constituent of viral factories. Binds to ssRNA and dsRNA. The protein is Non-structural protein 12A of Alopecurus aequalis (Barnyard grass).